A 148-amino-acid polypeptide reads, in one-letter code: Deoxyuridine 5'-triphosphate nucleotidohydrolase (148 aa).

Residues 68 to 70, asparagine 81, 85 to 87, and lysine 95 contribute to the substrate site; these read RSG and TID.

It belongs to the dUTPase family. The cofactor is Mg(2+).

The enzyme catalyses dUTP + H2O = dUMP + diphosphate + H(+). The protein operates within pyrimidine metabolism; dUMP biosynthesis; dUMP from dCTP (dUTP route): step 2/2. In terms of biological role, this enzyme is involved in nucleotide metabolism: it produces dUMP, the immediate precursor of thymidine nucleotides and it decreases the intracellular concentration of dUTP so that uracil cannot be incorporated into DNA. This is Deoxyuridine 5'-triphosphate nucleotidohydrolase from Rickettsia akari (strain Hartford).